Here is a 204-residue protein sequence, read N- to C-terminus: Large ribosomal subunit protein uL4 (204 aa).

Residues 42–52 (GTKAQKSRSQV) show a composition bias toward polar residues. The disordered stretch occupies residues 42-70 (GTKAQKSRSQVSGTTKKSKKQKGGGARHG).

It belongs to the universal ribosomal protein uL4 family. As to quaternary structure, part of the 50S ribosomal subunit.

Functionally, one of the primary rRNA binding proteins, this protein initially binds near the 5'-end of the 23S rRNA. It is important during the early stages of 50S assembly. It makes multiple contacts with different domains of the 23S rRNA in the assembled 50S subunit and ribosome. Forms part of the polypeptide exit tunnel. The polypeptide is Large ribosomal subunit protein uL4 (Xylella fastidiosa (strain M12)).